The chain runs to 490 residues: UDP-glycosyltransferase 86A1 (490 aa).

UDP-alpha-D-glucose contacts are provided by residues serine 294, 352-354 (CCQ), 369-377 (HCGWNSILE), and 391-394 (LTDQ).

It belongs to the UDP-glycosyltransferase family.

This Arabidopsis thaliana (Mouse-ear cress) protein is UDP-glycosyltransferase 86A1 (UGT86A1).